The following is a 352-amino-acid chain: Mitochondrial ubiquitin ligase activator of NFKB 1 (352 aa).

At 1-8 the chain is on the cytoplasmic side; it reads MESGGRPS. Residues 9–29 traverse the membrane as a helical segment; sequence LCQFILLGTTSVVTAALYSVY. Residues 30 to 238 lie on the Mitochondrial intermembrane side of the membrane; the sequence is RQKARVSQEL…LLQRQESSVR (209 aa). A Glycyl lysine isopeptide (Lys-Gly) (interchain with G-Cter in ubiquitin) cross-link involves residue Lys-52. Residues 239 to 259 traverse the membrane as a helical segment; the sequence is LWKVLALVFGFATCATLFFIL. Residues 260 to 352 are Cytoplasmic-facing; the sequence is RKQYLQRQER…ITRVIPLYNS (93 aa). Residues Lys-273 and Lys-299 each participate in a glycyl lysine isopeptide (Lys-Gly) (interchain with G-Cter in ubiquitin) cross-link. Residues 302–340 form an RING-type zinc finger; sequence CVVCLSSFKSCVFLECGHVCSCTECYRALPEPKKCPICR.

In terms of assembly, homooligomer. Interacts with MAP3K7/TAK1. Interacts with UBC9. Interacts with and sumoylates DNM1L. Interacts with MAVS. Interacts with TP53 (via N-terminus); the interaction leads to ubiquitination and proteasomal degradation of TP53. Post-translationally, ubiquitinated by PRKN during mitophagy, leading to its degradation and enhancement of mitophagy. Deubiquitinated by USP30. Widely expressed with highest levels in the heart, skeletal muscle, placenta, kidney and liver. Barely detectable in colon and thymus.

It is found in the mitochondrion outer membrane. It localises to the peroxisome. It catalyses the reaction S-ubiquitinyl-[E2 ubiquitin-conjugating enzyme]-L-cysteine + [acceptor protein]-L-lysine = [E2 ubiquitin-conjugating enzyme]-L-cysteine + N(6)-ubiquitinyl-[acceptor protein]-L-lysine.. The protein operates within protein modification; protein ubiquitination. It functions in the pathway protein modification; protein sumoylation. Functionally, exhibits weak E3 ubiquitin-protein ligase activity. E3 ubiquitin ligases accept ubiquitin from an E2 ubiquitin-conjugating enzyme in the form of a thioester and then directly transfer the ubiquitin to targeted substrates. Can ubiquitinate AKT1 preferentially at 'Lys-284' involving 'Lys-48'-linked polyubiquitination and seems to be involved in regulation of Akt signaling by targeting phosphorylated Akt to proteasomal degradation. Mediates polyubiquitination of cytoplasmic TP53 at 'Lys-24' which targets TP53 for proteasomal degradation, thus reducing TP53 levels in the cytoplasm and mitochondrion. Proposed to preferentially act as a SUMO E3 ligase at physiological concentrations. Plays a role in the control of mitochondrial morphology by promoting mitochondrial fragmentation, and influences mitochondrial localization. Likely to promote mitochondrial fission through negatively regulating the mitochondrial fusion proteins MFN1 and MFN2, acting in a pathway that is parallel to the PRKN/PINK1 regulatory pathway. May also be involved in the sumoylation of the membrane fission protein DNM1L. Inhibits cell growth. When overexpressed, activates JNK through MAP3K7/TAK1 and induces caspase-dependent apoptosis. Involved in the modulation of innate immune defense against viruses by inhibiting RIGI-dependent antiviral response. Can mediate RIGI sumoylation and disrupt its polyubiquitination. In Homo sapiens (Human), this protein is Mitochondrial ubiquitin ligase activator of NFKB 1 (MUL1).